Reading from the N-terminus, the 384-residue chain is S-adenosylmethionine synthase (384 aa).

ATP is bound at residue H15. D17 is a binding site for Mg(2+). Residue E43 coordinates K(+). L-methionine is bound by residues E56 and Q99. Residues 99–109 are flexible loop; the sequence is QSADINQGVDR. Residues 164–166, 230–231, D239, 245–246, A262, and K266 each bind ATP; these read DAK, RF, and RK. D239 contributes to the L-methionine binding site. K270 is a binding site for L-methionine.

The protein belongs to the AdoMet synthase family. As to quaternary structure, homotetramer; dimer of dimers. The cofactor is Mg(2+). K(+) is required as a cofactor.

The protein resides in the cytoplasm. The catalysed reaction is L-methionine + ATP + H2O = S-adenosyl-L-methionine + phosphate + diphosphate. Its pathway is amino-acid biosynthesis; S-adenosyl-L-methionine biosynthesis; S-adenosyl-L-methionine from L-methionine: step 1/1. Functionally, catalyzes the formation of S-adenosylmethionine (AdoMet) from methionine and ATP. The overall synthetic reaction is composed of two sequential steps, AdoMet formation and the subsequent tripolyphosphate hydrolysis which occurs prior to release of AdoMet from the enzyme. The protein is S-adenosylmethionine synthase of Haemophilus influenzae (strain PittGG).